The chain runs to 630 residues: Adagio-like protein 1 (630 aa).

The disordered stretch occupies residues M1–G36. A compositionally biased stretch (acidic residues) spans G16 to G28. Residues I48 to G127 enclose the PAS domain. An S-4a-FMN cysteine modification is found at C95. The F-box domain maps to S216–V262. Kelch repeat units follow at residues L378–G428, K430–G481, K483–P535, and R549–G601.

Belongs to the ADAGIO family. In terms of processing, FMN binds covalently to cysteine after exposure to blue light and is reversed in the dark.

It is found in the nucleus. The protein operates within protein modification; protein ubiquitination. Its function is as follows. Component of an E3 ubiquitin ligase complex that plays a central role in blue light-dependent circadian cycles. Acts as a blue light photoreceptor, due to the presence of FMN, that mediates light-regulated protein degradation of critical clock components by targeting them to the proteasome complex. The protein is Adagio-like protein 1 of Oryza sativa subsp. japonica (Rice).